A 527-amino-acid chain; its full sequence is Cytokinin dehydrogenase 6 (527 aa).

Residues 1 to 22 (MAARCSIAFMVMASCLSVVVSG) form the signal peptide. An FAD-binding PCMH-type domain is found at 55-236 (VAAAPEAVLH…TRARIGLEPA (182 aa)). FAD is bound by residues Gly-91 and Gly-93. His-94 is subject to Pros-8alpha-FAD histidine. Ser-95 and Gln-99 together coordinate FAD. Asn-121 carries an N-linked (GlcNAc...) asparagine glycan. The FAD site is built by Asp-160, Thr-165, Ser-171, Ile-175, and Ile-226. N-linked (GlcNAc...) asparagine glycans are attached at residues Asn-280 and Asn-323. FAD-binding residues include Tyr-475, Ser-510, and Gln-513.

Belongs to the oxygen-dependent FAD-linked oxidoreductase family. As to quaternary structure, monomer. Requires FAD as cofactor.

The protein localises to the secreted. Its subcellular location is the extracellular space. The catalysed reaction is N(6)-dimethylallyladenine + A + H2O = 3-methyl-2-butenal + adenine + AH2. In terms of biological role, catalyzes the oxidation of cytokinins, a family of N(6)-substituted adenine derivatives that are plant hormones, where the substituent is an isopentenyl group. The chain is Cytokinin dehydrogenase 6 (CKX6) from Oryza sativa subsp. japonica (Rice).